Here is a 229-residue protein sequence, read N- to C-terminus: NAD(P)H-hydrate epimerase (229 aa).

The YjeF N-terminal domain maps to 10-217 (AINVDLELFN…ALQRKYELNL (208 aa)). Residue 60-64 (NNGGD) coordinates (6S)-NADPHX. 2 residues coordinate K(+): Asn-61 and Asp-125. (6S)-NADPHX-binding positions include 129–135 (GFSFKPP) and Asp-158. Ser-161 is a K(+) binding site.

It belongs to the NnrE/AIBP family. K(+) serves as cofactor.

The catalysed reaction is (6R)-NADHX = (6S)-NADHX. It carries out the reaction (6R)-NADPHX = (6S)-NADPHX. Its function is as follows. Catalyzes the epimerization of the S- and R-forms of NAD(P)HX, a damaged form of NAD(P)H that is a result of enzymatic or heat-dependent hydration. This is a prerequisite for the S-specific NAD(P)H-hydrate dehydratase to allow the repair of both epimers of NAD(P)HX. The polypeptide is NAD(P)H-hydrate epimerase (Drosophila mojavensis (Fruit fly)).